The sequence spans 161 residues: Cyclic pyranopterin monophosphate synthase (161 aa).

Residues 75–77 and 113–114 each bind substrate; these read LCH and ME. Residue aspartate 128 is part of the active site.

This sequence belongs to the MoaC family. As to quaternary structure, homohexamer; trimer of dimers.

The enzyme catalyses (8S)-3',8-cyclo-7,8-dihydroguanosine 5'-triphosphate = cyclic pyranopterin phosphate + diphosphate. It participates in cofactor biosynthesis; molybdopterin biosynthesis. Catalyzes the conversion of (8S)-3',8-cyclo-7,8-dihydroguanosine 5'-triphosphate to cyclic pyranopterin monophosphate (cPMP). This Escherichia coli O139:H28 (strain E24377A / ETEC) protein is Cyclic pyranopterin monophosphate synthase.